We begin with the raw amino-acid sequence, 289 residues long: Acetyl-coenzyme A carboxylase carboxyl transferase subunit beta 2 (289 aa).

In terms of domain architecture, CoA carboxyltransferase N-terminal spans 25-289; the sequence is VWTKCPSCEQ…TNKSIQPEAE (265 aa). Zn(2+) is bound by residues Cys29, Cys32, Cys48, and Cys51. Residues 29–51 form a C4-type zinc finger; it reads CPSCEQVLYRIALKENLEVCPKC.

The protein belongs to the AccD/PCCB family. Acetyl-CoA carboxylase is a heterohexamer composed of biotin carboxyl carrier protein (AccB), biotin carboxylase (AccC) and two subunits each of ACCase subunit alpha (AccA) and ACCase subunit beta (AccD). Zn(2+) serves as cofactor.

The protein localises to the cytoplasm. The enzyme catalyses N(6)-carboxybiotinyl-L-lysyl-[protein] + acetyl-CoA = N(6)-biotinyl-L-lysyl-[protein] + malonyl-CoA. The protein operates within lipid metabolism; malonyl-CoA biosynthesis; malonyl-CoA from acetyl-CoA: step 1/1. Functionally, component of the acetyl coenzyme A carboxylase (ACC) complex. Biotin carboxylase (BC) catalyzes the carboxylation of biotin on its carrier protein (BCCP) and then the CO(2) group is transferred by the transcarboxylase to acetyl-CoA to form malonyl-CoA. The protein is Acetyl-coenzyme A carboxylase carboxyl transferase subunit beta 2 of Vibrio campbellii (strain ATCC BAA-1116).